A 129-amino-acid polypeptide reads, in one-letter code: Lysozyme C-3 (129 aa).

The region spanning 1 to 129 (KVYERCELAA…VSRWIRGCRL (129 aa)) is the C-type lysozyme domain. Cystine bridges form between C6–C127, C30–C115, C64–C80, and C76–C94. Active-site residues include E35 and D52.

It belongs to the glycosyl hydrolase 22 family.

Its subcellular location is the secreted. It carries out the reaction Hydrolysis of (1-&gt;4)-beta-linkages between N-acetylmuramic acid and N-acetyl-D-glucosamine residues in a peptidoglycan and between N-acetyl-D-glucosamine residues in chitodextrins.. Functionally, lysozymes have primarily a bacteriolytic function; those in tissues and body fluids are associated with the monocyte-macrophage system and enhance the activity of immunoagents. The polypeptide is Lysozyme C-3 (Anas platyrhynchos (Mallard)).